The following is a 76-amino-acid chain: uncharacterized protein (76 aa).

The protein localises to the plastid. This is an uncharacterized protein from Euglena longa (Euglenophycean alga).